Here is a 136-residue protein sequence, read N- to C-terminus: Cytidine deaminase (136 aa).

A CMP/dCMP-type deaminase domain is found at 1–128 (MNRQELITEA…ELLPGAFSSE (128 aa)). 42–44 (NIE) is a binding site for substrate. C53 contributes to the Zn(2+) binding site. Residue E55 is the Proton donor of the active site. Zn(2+) contacts are provided by C86 and C89.

Belongs to the cytidine and deoxycytidylate deaminase family. As to quaternary structure, homotetramer. Requires Zn(2+) as cofactor.

The enzyme catalyses cytidine + H2O + H(+) = uridine + NH4(+). The catalysed reaction is 2'-deoxycytidine + H2O + H(+) = 2'-deoxyuridine + NH4(+). This enzyme scavenges exogenous and endogenous cytidine and 2'-deoxycytidine for UMP synthesis. The polypeptide is Cytidine deaminase (cdd) (Bacillus subtilis (strain 168)).